A 282-amino-acid chain; its full sequence is ATP phosphoribosyltransferase (282 aa).

It belongs to the ATP phosphoribosyltransferase family. Long subfamily. Mg(2+) serves as cofactor.

The protein localises to the cytoplasm. It carries out the reaction 1-(5-phospho-beta-D-ribosyl)-ATP + diphosphate = 5-phospho-alpha-D-ribose 1-diphosphate + ATP. It participates in amino-acid biosynthesis; L-histidine biosynthesis; L-histidine from 5-phospho-alpha-D-ribose 1-diphosphate: step 1/9. Feedback inhibited by histidine. Catalyzes the condensation of ATP and 5-phosphoribose 1-diphosphate to form N'-(5'-phosphoribosyl)-ATP (PR-ATP). Has a crucial role in the pathway because the rate of histidine biosynthesis seems to be controlled primarily by regulation of HisG enzymatic activity. The chain is ATP phosphoribosyltransferase from Pyrobaculum neutrophilum (strain DSM 2338 / JCM 9278 / NBRC 100436 / V24Sta) (Thermoproteus neutrophilus).